The primary structure comprises 271 residues: uncharacterized protein (271 aa).

3 Solcar repeats span residues 3–74 (VQTL…AKRR), 81–163 (EGAI…SKKY), and 171–268 (DISV…FKSK). A run of 6 helical transmembrane segments spans residues 5-26 (TLMAASAGAVASRLLCHPIDTI), 49-69 (GLPISLTLITPATCLYLSTYV), 84-104 (ILYSICGMTAEVVSSFVWTPL), 138-158 (GYWMGVAIYLPTTVSWWVCYE), 170-190 (WDISVIAPICSALGTVVATTI), and 240-261 (FTRGLFTRMCYIMPSGMISMSV).

Belongs to the mitochondrial carrier (TC 2.A.29) family.

The protein resides in the mitochondrion inner membrane. This is an uncharacterized protein from Schizosaccharomyces pombe (strain 972 / ATCC 24843) (Fission yeast).